The chain runs to 245 residues: Aliphatic sulfonates import ATP-binding protein SsuB (245 aa).

The ABC transporter domain occupies 6 to 225 (VTVRGLRRAF…SRGDEGFDDL (220 aa)). An ATP-binding site is contributed by 38 to 45 (GLSGSGKS).

Belongs to the ABC transporter superfamily. Aliphatic sulfonates importer (TC 3.A.1.17.2) family. The complex is composed of two ATP-binding proteins (SsuB), two transmembrane proteins (SsuC) and a solute-binding protein (SsuA).

The protein resides in the cell membrane. The enzyme catalyses ATP + H2O + aliphatic sulfonate-[sulfonate-binding protein]Side 1 = ADP + phosphate + aliphatic sulfonateSide 2 + [sulfonate-binding protein]Side 1.. Part of the ABC transporter complex SsuABC involved in aliphatic sulfonates import. Responsible for energy coupling to the transport system. This chain is Aliphatic sulfonates import ATP-binding protein SsuB, found in Mycobacterium sp. (strain MCS).